Reading from the N-terminus, the 499-residue chain is Probable cytosol aminopeptidase (499 aa).

Residues Lys-268 and Asp-273 each coordinate Mn(2+). Residue Lys-280 is part of the active site. Positions 291, 350, and 352 each coordinate Mn(2+). Arg-354 is a catalytic residue.

This sequence belongs to the peptidase M17 family. Mn(2+) is required as a cofactor.

Its subcellular location is the cytoplasm. It carries out the reaction Release of an N-terminal amino acid, Xaa-|-Yaa-, in which Xaa is preferably Leu, but may be other amino acids including Pro although not Arg or Lys, and Yaa may be Pro. Amino acid amides and methyl esters are also readily hydrolyzed, but rates on arylamides are exceedingly low.. The catalysed reaction is Release of an N-terminal amino acid, preferentially leucine, but not glutamic or aspartic acids.. Presumably involved in the processing and regular turnover of intracellular proteins. Catalyzes the removal of unsubstituted N-terminal amino acids from various peptides. The sequence is that of Probable cytosol aminopeptidase from Halorhodospira halophila (strain DSM 244 / SL1) (Ectothiorhodospira halophila (strain DSM 244 / SL1)).